Reading from the N-terminus, the 264-residue chain is SPARC (264 aa).

The first 16 residues, 1–16 (MRYALAACLLLLAASS), serve as a signal peptide directing secretion. The region spanning 52–74 (PCEDHQCGWGKECVVGKKGEPTC) is the Follistatin-like domain. Disulfide bonds link C53/C64, C58/C74, C76/C110, C80/C103, C92/C135, C141/C228, and C236/C252. Positions 68–137 (KKGEPTCECI…HLEYLGECKK (70 aa)) constitute a Kazal-like domain. N-linked (GlcNAc...) asparagine glycosylation is present at N96. An EF-hand domain is found at 224 to 259 (PMESCIKPFLEGCDANNDGNISIKEWGKCLGLKEGE). Ca(2+) is bound by residues D237, N239, D241, N243, and E248. N243 is a glycosylation site (N-linked (GlcNAc...) asparagine).

It belongs to the SPARC family. In terms of tissue distribution, expressed by body wall and sex muscle cells. Probable association with basement membranes.

It localises to the secreted. The protein resides in the extracellular space. It is found in the extracellular matrix. The protein localises to the basement membrane. In terms of biological role, has a high affinity for collagen. Affects nematode body morphology and mobility. Essential for C.elegans development and muscle function. The cysteine-rich region could have protease inhibitory activity or may provide the framework for a protein binding module. Probable role in skeletal morphogenesis. This is SPARC (ost-1) from Caenorhabditis elegans.